Consider the following 492-residue polypeptide: Bifunctional protein GlmU (492 aa).

Positions 1 to 238 (MRDAAVVILA…AALVAGVNDR (238 aa)) are pyrophosphorylase. Residues 9–12 (LAAG), Lys-23, Gln-80, and 85–86 (GT) contribute to the UDP-N-acetyl-alpha-D-glucosamine site. Asp-111 is a Mg(2+) binding site. Gly-148, Glu-163, Asn-178, and Asn-236 together coordinate UDP-N-acetyl-alpha-D-glucosamine. Asn-236 is a binding site for Mg(2+). The segment at 239–259 (VQLADLAAVLNRRIVEGHQRA) is linker. The tract at residues 260 to 492 (GVTIIDPAST…EDQGPEATGE (233 aa)) is N-acetyltransferase. Arg-341 and Lys-359 together coordinate UDP-N-acetyl-alpha-D-glucosamine. Catalysis depends on His-371, which acts as the Proton acceptor. UDP-N-acetyl-alpha-D-glucosamine-binding residues include Tyr-374 and Asn-385. Residues Ala-388, 394-395 (NY), Ser-413, and Ala-431 contribute to the acetyl-CoA site. Residues 469–483 (EAAAAAGAGAGAAAE) show a composition bias toward low complexity. The interval 469–492 (EAAAAAGAGAGAAAEDQGPEATGE) is disordered.

The protein in the N-terminal section; belongs to the N-acetylglucosamine-1-phosphate uridyltransferase family. This sequence in the C-terminal section; belongs to the transferase hexapeptide repeat family. Homotrimer. Requires Mg(2+) as cofactor.

It localises to the cytoplasm. The catalysed reaction is alpha-D-glucosamine 1-phosphate + acetyl-CoA = N-acetyl-alpha-D-glucosamine 1-phosphate + CoA + H(+). The enzyme catalyses N-acetyl-alpha-D-glucosamine 1-phosphate + UTP + H(+) = UDP-N-acetyl-alpha-D-glucosamine + diphosphate. Its pathway is nucleotide-sugar biosynthesis; UDP-N-acetyl-alpha-D-glucosamine biosynthesis; N-acetyl-alpha-D-glucosamine 1-phosphate from alpha-D-glucosamine 6-phosphate (route II): step 2/2. It participates in nucleotide-sugar biosynthesis; UDP-N-acetyl-alpha-D-glucosamine biosynthesis; UDP-N-acetyl-alpha-D-glucosamine from N-acetyl-alpha-D-glucosamine 1-phosphate: step 1/1. The protein operates within bacterial outer membrane biogenesis; LPS lipid A biosynthesis. Its function is as follows. Catalyzes the last two sequential reactions in the de novo biosynthetic pathway for UDP-N-acetylglucosamine (UDP-GlcNAc). The C-terminal domain catalyzes the transfer of acetyl group from acetyl coenzyme A to glucosamine-1-phosphate (GlcN-1-P) to produce N-acetylglucosamine-1-phosphate (GlcNAc-1-P), which is converted into UDP-GlcNAc by the transfer of uridine 5-monophosphate (from uridine 5-triphosphate), a reaction catalyzed by the N-terminal domain. The protein is Bifunctional protein GlmU of Mycolicibacterium vanbaalenii (strain DSM 7251 / JCM 13017 / BCRC 16820 / KCTC 9966 / NRRL B-24157 / PYR-1) (Mycobacterium vanbaalenii).